A 272-amino-acid chain; its full sequence is Pyridoxal phosphate phosphatase YbhA (272 aa).

The Nucleophile role is filled by Asp-9. Asp-9 lines the Mg(2+) pocket. Leu-10 contacts phosphate. Asp-11 is a binding site for Mg(2+). Phosphate is bound by residues 43–44 and Lys-200; that span reads TG. Asp-223 serves as a coordination point for Mg(2+). Asn-226 is a binding site for phosphate.

It belongs to the HAD-like hydrolase superfamily. CbbY/CbbZ/Gph/YieH family. The cofactor is Mg(2+). Mn(2+) serves as cofactor. Requires Co(2+) as cofactor. Zn(2+) is required as a cofactor.

The catalysed reaction is pyridoxal 5'-phosphate + H2O = pyridoxal + phosphate. In terms of biological role, catalyzes the dephosphorylation of pyridoxal-phosphate (PLP). Can also hydrolyze erythrose-4-phosphate (Ery4P) and fructose-1,6-bis-phosphate (Fru1,6bisP). This is Pyridoxal phosphate phosphatase YbhA (ybhA) from Escherichia coli (strain K12).